The sequence spans 2353 residues: C2 domain-containing protein 3 (2353 aa).

The interval methionine 1–threonine 27 is disordered. Phosphoserine is present on serine 466. 2 disordered regions span residues lysine 488–asparagine 508 and glycine 549–proline 568. Residues lysine 496 to arginine 507 show a composition bias toward basic residues. In terms of domain architecture, C2 1 spans aspartate 521–aspartate 678. A Phosphoserine modification is found at serine 728. 4 C2 domains span residues serine 787–leucine 919, glutamine 985–aspartate 1147, serine 1171–tyrosine 1339, and glutamate 1403–valine 1533. The tract at residues histidine 1569–glutamate 1591 is disordered. One can recognise a C2 6 domain in the interval threonine 1617–tyrosine 1745. A disordered region spans residues serine 1822–histidine 1846. Residues proline 1830–glutamine 1839 show a composition bias toward polar residues. Serine 1891 is subject to Phosphoserine. 4 disordered regions span residues alanine 1972–arginine 2032, threonine 2084–phenylalanine 2118, leucine 2130–leucine 2269, and proline 2301–proline 2334. The segment covering proline 2007–threonine 2016 has biased composition (basic and acidic residues). Residues threonine 2084 to isoleucine 2098 are compositionally biased toward polar residues. A phosphoserine mark is found at serine 2114 and serine 2132. The span at serine 2181–aspartate 2198 shows a compositional bias: polar residues. Positions serine 2236–glutamine 2253 are enriched in basic and acidic residues. Positions arginine 2254–serine 2267 are enriched in polar residues.

In terms of assembly, interacts with IFT88, BBS4 and PCM1. Interacts with OFD1; OFD1 may act as a negative regulator of C2CD3. Associates with the BBSome complex.

The protein localises to the cytoplasm. Its subcellular location is the cytoskeleton. It localises to the cilium basal body. It is found in the microtubule organizing center. The protein resides in the centrosome. The protein localises to the centriole. In terms of biological role, component of the centrioles that acts as a positive regulator of centriole elongation. Promotes assembly of centriolar distal appendage, a structure at the distal end of the mother centriole that acts as an anchor of the cilium, and is required for recruitment of centriolar distal appendages proteins CEP83, SCLT1, CEP89, FBF1 and CEP164. Not required for centriolar satellite integrity or RAB8 activation. Required for primary cilium formation. Required for sonic hedgehog/SHH signaling and for proteolytic processing of GLI3. The protein is C2 domain-containing protein 3 (C2CD3) of Homo sapiens (Human).